A 457-amino-acid polypeptide reads, in one-letter code: Bifunctional protein GlmU (457 aa).

Residues methionine 1 to arginine 229 form a pyrophosphorylase region. Residues leucine 8–glycine 11, lysine 22, glutamine 73, and glycine 78–threonine 79 each bind UDP-N-acetyl-alpha-D-glucosamine. Aspartate 103 provides a ligand contact to Mg(2+). UDP-N-acetyl-alpha-D-glucosamine is bound by residues glycine 140, glutamate 155, asparagine 170, and asparagine 227. A Mg(2+)-binding site is contributed by asparagine 227. Residues valine 230–asparagine 250 are linker. The interval glycine 251–lysine 457 is N-acetyltransferase. The UDP-N-acetyl-alpha-D-glucosamine site is built by arginine 332 and lysine 350. Residue histidine 362 is the Proton acceptor of the active site. UDP-N-acetyl-alpha-D-glucosamine contacts are provided by tyrosine 365 and asparagine 376. Acetyl-CoA contacts are provided by residues asparagine 385–tyrosine 386, alanine 422, and arginine 439.

In the N-terminal section; belongs to the N-acetylglucosamine-1-phosphate uridyltransferase family. The protein in the C-terminal section; belongs to the transferase hexapeptide repeat family. Homotrimer. Requires Mg(2+) as cofactor.

The protein resides in the cytoplasm. It catalyses the reaction alpha-D-glucosamine 1-phosphate + acetyl-CoA = N-acetyl-alpha-D-glucosamine 1-phosphate + CoA + H(+). It carries out the reaction N-acetyl-alpha-D-glucosamine 1-phosphate + UTP + H(+) = UDP-N-acetyl-alpha-D-glucosamine + diphosphate. The protein operates within nucleotide-sugar biosynthesis; UDP-N-acetyl-alpha-D-glucosamine biosynthesis; N-acetyl-alpha-D-glucosamine 1-phosphate from alpha-D-glucosamine 6-phosphate (route II): step 2/2. It participates in nucleotide-sugar biosynthesis; UDP-N-acetyl-alpha-D-glucosamine biosynthesis; UDP-N-acetyl-alpha-D-glucosamine from N-acetyl-alpha-D-glucosamine 1-phosphate: step 1/1. It functions in the pathway bacterial outer membrane biogenesis; LPS lipid A biosynthesis. Its function is as follows. Catalyzes the last two sequential reactions in the de novo biosynthetic pathway for UDP-N-acetylglucosamine (UDP-GlcNAc). The C-terminal domain catalyzes the transfer of acetyl group from acetyl coenzyme A to glucosamine-1-phosphate (GlcN-1-P) to produce N-acetylglucosamine-1-phosphate (GlcNAc-1-P), which is converted into UDP-GlcNAc by the transfer of uridine 5-monophosphate (from uridine 5-triphosphate), a reaction catalyzed by the N-terminal domain. This Clostridium botulinum (strain Langeland / NCTC 10281 / Type F) protein is Bifunctional protein GlmU.